The chain runs to 1433 residues: CAP-Gly domain-containing linker protein 1 (1433 aa).

Residues 1–51 (MSMLKPSGLKAPSKTIKHGSTLLKAPASVATAPAEKAPSSEKSSSTTTADA) are disordered. Low complexity predominate over residues 32–49 (APAEKAPSSEKSSSTTTA). The 43-residue stretch at 79–121 (GETQFAPGQWAGIVLDEPIGKNDGSVAGVRYFQCEPLRGIFTR) folds into the CAP-Gly 1 domain. The segment at 133–208 (DEANGTQTAH…VSNLSEAGSL (76 aa)) is disordered. The segment covering 140-168 (TAHASRATSPTSTSTASAVSASPAALLPS) has biased composition (low complexity). The segment covering 184–204 (TPSQFSNLSKTASGSVSNLSE) has biased composition (polar residues). The CAP-Gly 2 domain occupies 235–277 (GETDFAKGEWCGVELDEPLGKNDGAVAGTRYFQCQPRYGLFAP). Low complexity predominate over residues 319–333 (SLSSVASSVSSKPSR). Residues 319 to 338 (SLSSVASSVSSKPSRTGLLT) form a disordered region. The stretch at 351–1353 (TTALQEALKE…CEAALNGNEE (1003 aa)) forms a coiled coil. The segment at 1412–1429 (PYCDTCEMFGHWTADCND) adopts a CCHC-type zinc-finger fold.

It is found in the cytoplasm. The protein resides in the cytoskeleton. Its subcellular location is the cytoplasmic vesicle membrane. The protein localises to the cell projection. It localises to the ruffle. In terms of biological role, binds to the plus end of microtubules and regulates the dynamics of the microtubule cytoskeleton. Promotes microtubule growth and microtubule bundling. Links cytoplasmic vesicles to microtubules and thereby plays an important role in intracellular vesicle trafficking. Plays a role macropinocytosis and endosome trafficking. In Gallus gallus (Chicken), this protein is CAP-Gly domain-containing linker protein 1 (CLIP1).